The chain runs to 320 residues: Malate dehydrogenase (320 aa).

Residues 10 to 15 (GAGQIG) and Asp34 each bind NAD(+). Arg83 and Arg89 together coordinate substrate. NAD(+) is bound by residues Asn96 and 119-121 (ITN). 2 residues coordinate substrate: Asn121 and Arg152. His176 serves as the catalytic Proton acceptor.

The protein belongs to the LDH/MDH superfamily. MDH type 3 family.

It carries out the reaction (S)-malate + NAD(+) = oxaloacetate + NADH + H(+). Its function is as follows. Catalyzes the reversible oxidation of malate to oxaloacetate. This is Malate dehydrogenase from Cereibacter sphaeroides (strain ATCC 17025 / ATH 2.4.3) (Rhodobacter sphaeroides).